A 177-amino-acid chain; its full sequence is Peptide methionine sulfoxide reductase MsrA (177 aa).

Residue Cys-14 is part of the active site.

Belongs to the MsrA Met sulfoxide reductase family.

It catalyses the reaction L-methionyl-[protein] + [thioredoxin]-disulfide + H2O = L-methionyl-(S)-S-oxide-[protein] + [thioredoxin]-dithiol. The enzyme catalyses [thioredoxin]-disulfide + L-methionine + H2O = L-methionine (S)-S-oxide + [thioredoxin]-dithiol. Has an important function as a repair enzyme for proteins that have been inactivated by oxidation. Catalyzes the reversible oxidation-reduction of methionine sulfoxide in proteins to methionine. The protein is Peptide methionine sulfoxide reductase MsrA of Bacillus velezensis (strain DSM 23117 / BGSC 10A6 / LMG 26770 / FZB42) (Bacillus amyloliquefaciens subsp. plantarum).